A 1013-amino-acid chain; its full sequence is Alpha-2-macroglobulin homolog (1013 aa).

The tract at residues 804 to 844 (AQRGANGERDGLRETVPVRPAGARQLLSGSGSVGADKAGGN) is disordered.

The protein belongs to the protease inhibitor I39 (alpha-2-macroglobulin) family. Bacterial alpha-2-macroglobulin subfamily.

This is Alpha-2-macroglobulin homolog from Deinococcus radiodurans (strain ATCC 13939 / DSM 20539 / JCM 16871 / CCUG 27074 / LMG 4051 / NBRC 15346 / NCIMB 9279 / VKM B-1422 / R1).